The sequence spans 426 residues: Proline--tRNA ligase (426 aa).

The protein belongs to the class-II aminoacyl-tRNA synthetase family. ProS type 2 subfamily. In terms of assembly, homodimer.

Its subcellular location is the cytoplasm. The catalysed reaction is tRNA(Pro) + L-proline + ATP = L-prolyl-tRNA(Pro) + AMP + diphosphate. In terms of biological role, catalyzes the attachment of proline to tRNA(Pro) in a two-step reaction: proline is first activated by ATP to form Pro-AMP and then transferred to the acceptor end of tRNA(Pro). This is Proline--tRNA ligase from Rickettsia rickettsii (strain Iowa).